The following is a 157-amino-acid chain: Transcription elongation factor GreA (157 aa).

It belongs to the GreA/GreB family.

In terms of biological role, necessary for efficient RNA polymerase transcription elongation past template-encoded arresting sites. The arresting sites in DNA have the property of trapping a certain fraction of elongating RNA polymerases that pass through, resulting in locked ternary complexes. Cleavage of the nascent transcript by cleavage factors such as GreA or GreB allows the resumption of elongation from the new 3'terminus. GreA releases sequences of 2 to 3 nucleotides. In Caulobacter sp. (strain K31), this protein is Transcription elongation factor GreA.